A 318-amino-acid polypeptide reads, in one-letter code: MLTKNNSLLSRLPARISFGLKISNKNVNSTYSNVASAYCEGATYKKNGVSRLQNELLSQKTNNETIPVPLQHFIRPAAKHSIFTQIKGYGERSRPEFERPITLEELKSLDYESGKHFVPQSFSDTFAYLIVKGLRAFADLYFQKDYVRRVVVLETVAAIPGMVGGMFRHLYSLRNLEDNGEAIKKLVLEAENERQHLLTFLAVLKPNVLDRMLIKLGQFLFFNGYMVFYFVAPRTAHRFVGYLEEEAVRSYDAFEEEILLGHIKNVEAPRISKDYWNLPEEAMLIDVVRAVRADEAEHRDVNHKMADSKSFSLAHNPY.

The helical transmembrane segment at 150 to 170 threads the bilayer; it reads VVVLETVAAIPGMVGGMFRHL. Residues E154, E193, and H196 each coordinate Fe cation. A helical membrane pass occupies residues 212–232; sequence MLIKLGQFLFFNGYMVFYFVA. Fe cation contacts are provided by E244, E295, and H298.

It belongs to the alternative oxidase family. Found as monomers and homodimers. Fe cation is required as a cofactor.

The protein resides in the mitosome membrane. It carries out the reaction 2 a ubiquinol + O2 = 2 a ubiquinone + 2 H2O. Alternative oxidase which function may be to reoxidize reducing equivalents produced by glycolysis such as ubiquinol. The sequence is that of Ubiquinol oxidase (AOX) from Trachipleistophora hominis (Microsporidian parasite).